We begin with the raw amino-acid sequence, 486 residues long: MSGSTPFQMRLVHLDLKGAPPKVSYLSEIFPLFRALGANGLLIEYEDMFPYEGPLRLLRAKYAYSPSEIKEILHLAGLNELEVIPLVQTFGHMEFVLKHTAFAHLREVGSFPCTLNPHEAESLALVGAMIDQVLELHPGAQRLHIGCDEVYYLGEGEASRRWLQQEQNSTGKLCLSHMRAVASGVKARRPSVTPLVWDDMLRDLPEDQLAASGVPQLVEPVLWDYTADLDVHGKVLLMQKYRRCGFPQLWAASAFKGATGPSQAVPPVEHHLRNHVQWLQVAGSGPTDSLQGIILTGWQRYDHYSVLCELLPAGVPSLAACLQLLLRGGFDEDVKAKVENLLGISSLEKTDPVREGAGSFPGSNILALVTQVSLHLRSSVDALLEGNRYVTGWFSPYHRQRKLIHPVMVQHIQPAALSLLAQWSTLVQELEAALQLAFYPDAVEEWLEENVHPSLQRLQALLQDLSEVSAPPLPPTSPGRDVAQDP.

Catalysis depends on glutamate 149, which acts as the Proton donor.

It belongs to the glycosyl hydrolase 20 family. As to quaternary structure, homodimer; disulfide-linked. Expressed in synovial fibroblasts and synovial membranes.

The protein localises to the cytoplasm. It is found in the nucleus. The protein resides in the extracellular vesicle. It carries out the reaction Hydrolysis of terminal non-reducing N-acetyl-D-hexosamine residues in N-acetyl-beta-D-hexosaminides.. With respect to regulation, inhibited by O-(2-acetamido-2-deoxy-D-glucopyranosylidene)amino N-phenylcarbamate (PUGNAc). Inhibited by galacto-NAG-thiazoline. Its function is as follows. Has hexosaminidase activity. Responsible for the cleavage of the monosaccharides N-acetylglucosamine (GlcNAc) and N-acetylgalactosamine (GalNAc) from cellular substrates. Has a preference for galactosaminide over glucosaminide substrates. The chain is Hexosaminidase D from Homo sapiens (Human).